We begin with the raw amino-acid sequence, 344 residues long: Heat-inducible transcription repressor HrcA (344 aa).

The protein belongs to the HrcA family.

Functionally, negative regulator of class I heat shock genes (grpE-dnaK-dnaJ and groELS operons). Prevents heat-shock induction of these operons. This Streptococcus pneumoniae (strain ATCC 700669 / Spain 23F-1) protein is Heat-inducible transcription repressor HrcA.